Consider the following 264-residue polypeptide: MNYLNIYNLLIEKGLNRGNDKSLLTYYTETHHIIPRCMGGTDDKTNLVLLTPEEHFTAHLLLFKIYRLPKLALAIRMMCYSSDGTRLNNKMYGWIKTAVSSSISESMKEFWKDDDNKKYMSNARRNAGKPIYQYDLNGNFIRKYRCITDAAEDMSYSCSTSIKQCVDGKRKTAGGFQWKYYYSDNIGKPSRMSNATKQKMSKSKRGITQKRNVPVFQYDTTGKLLRVFPRIKDAAVSVKGCMSNIKKCISGKSKIAYGYVWAYS.

Residues 25–50 (TYYTETHHIIPRCMGGTDDKTNLVLL) enclose the HNH domain.

This sequence to phage T4 mobC and mobD.

This is Probable mobile endonuclease B (mobB) from Escherichia coli (Bacteriophage T4).